The primary structure comprises 44 residues: Photosystem I reaction center subunit IX (44 aa).

The helical transmembrane segment at 7–27 threads the bilayer; sequence YLSVAPVVSTLWFAALAGLLI.

The protein belongs to the PsaJ family.

It localises to the plastid. The protein localises to the chloroplast thylakoid membrane. Functionally, may help in the organization of the PsaE and PsaF subunits. The protein is Photosystem I reaction center subunit IX of Lotus japonicus (Lotus corniculatus var. japonicus).